The primary structure comprises 339 residues: Cyclin-D1-1 (339 aa).

This sequence belongs to the cyclin family. Cyclin D subfamily. In terms of assembly, interacts with CDKA-1 and KRP6/ICK4. Expressed in roots, leaves and flowers.

Functionally, may activate cell cycle in the root apical meristem (RAM) and promote embryonic root (radicle) protrusion. This Arabidopsis thaliana (Mouse-ear cress) protein is Cyclin-D1-1 (CYCD1-1).